The chain runs to 196 residues: DnaA initiator-associating protein DiaA (196 aa).

The SIS domain occupies 34–196 (LVQSLLNGNK…DNTLFPHQDD (163 aa)).

This sequence belongs to the SIS family. DiaA subfamily. As to quaternary structure, homotetramer; dimer of dimers.

Functionally, required for the timely initiation of chromosomal replication via direct interactions with the DnaA initiator protein. The sequence is that of DnaA initiator-associating protein DiaA from Yersinia pseudotuberculosis serotype O:1b (strain IP 31758).